The sequence spans 533 residues: Subtilisin-like serine protease pepC (533 aa).

The N-terminal stretch at 1–16 (MKGILGLSLLPLLTAA) is a signal peptide. An Inhibitor I9 domain is found at 43-136 (SYIVVFKKHV…IERDSEVHTM (94 aa)). Positions 145 to 450 (PWGLARISHR…VGIYKRNELT (306 aa)) constitute a Peptidase S8 domain. Catalysis depends on charge relay system residues aspartate 181 and histidine 213. Asparagine 283 is a glycosylation site (N-linked (GlcNAc...) asparagine). A disulfide bond links cysteine 320 and cysteine 351. Catalysis depends on serine 379, which acts as the Charge relay system. Residue asparagine 435 is glycosylated (N-linked (GlcNAc...) asparagine). The span at 496–513 (KSCSPRSLVPSTARSRMP) shows a compositional bias: polar residues. Residues 496-519 (KSCSPRSLVPSTARSRMPSSHRSE) are disordered.

The protein belongs to the peptidase S8 family.

The sequence is that of Subtilisin-like serine protease pepC (pepC) from Aspergillus niger.